We begin with the raw amino-acid sequence, 127 residues long: Large ribosomal subunit protein bL21 (127 aa).

This sequence belongs to the bacterial ribosomal protein bL21 family. In terms of assembly, part of the 50S ribosomal subunit. Contacts protein L20.

In terms of biological role, this protein binds to 23S rRNA in the presence of protein L20. The sequence is that of Large ribosomal subunit protein bL21 from Blochmanniella floridana.